The chain runs to 414 residues: MAILQIGAGGVGWVVAHKAAQNNDVLGDITIASRTVGKCEKIIESIQKKNNLKDSTKKLEARAVNADDVDSLVALIKEVQPDLVINAGPPWVNMSIMEACYQAKVSYLDTSVAVDLCSEGQQVPQAYDWQWGYREKFEEAGITGILGAGFDPGVVSVFAAYAVKHLFDEIDTIDVMDVNAGDHGKKFATNFDPETNMLEIQGDSFYWENGEWKQVPCHSRMLEFEFPNCGSHKVYSMAHDEVRSMQEFIPAKRIEFWMGFGDRYLNYFNVMRDIGLLSPDPLTLHDGTVVQPLHVLKALLPDPTSLAPGYTGLTCIGTWVQGKKDGKERSVFIYNNADHEVAYEDVEHQAISYTTGVPAITAALQFFRGKWADKGVFNMEQLDPDPFLETMPSIGLDWHVQELEPGQPVIHKLK.

This sequence belongs to the saccharopine dehydrogenase family. Carboxynorspermidine synthase subfamily. Homodimer.

The catalysed reaction is carboxynorspermidine + NADP(+) + H2O = L-aspartate 4-semialdehyde + propane-1,3-diamine + NADPH + H(+). It catalyses the reaction carboxyspermidine + NADP(+) + H2O = L-aspartate 4-semialdehyde + putrescine + NADPH + H(+). Activated by dithiothreitol and inhibited by SH-reactive compounds. In terms of biological role, involved in norspermidine biosynthesis. Catalyzes the synthesis of carboxynorspermidine from L-aspartate 4-semialdehyde and 1,3-diaminopropane. Is also slightly active with putrescine as a substrate. This Vibrio alginolyticus (strain ATCC 17749 / DSM 2171 / NBRC 15630 / NCIMB 1903 / NCTC 12160 / XII-53) protein is Carboxynorspermidine synthase.